The following is a 132-amino-acid chain: Putative F-box protein At4g05620 (132 aa).

Residues Q17–R63 enclose the F-box domain.

In Arabidopsis thaliana (Mouse-ear cress), this protein is Putative F-box protein At4g05620.